The following is a 1495-amino-acid chain: Terminal uridylyltransferase 7 (1495 aa).

Disordered regions lie at residues 1-30 (MGDT…GHPQ), 43-69 (HGSK…RKGP), 89-140 (WMND…EDGY), and 162-205 (LETT…PVID). The span at 15–26 (DRGTMDDDDFRR) shows a compositional bias: basic and acidic residues. Phosphothreonine occurs at positions 57 and 64. Basic and acidic residues-rich tracts occupy residues 92–118 (DSHK…EFKP) and 128–140 (QRKD…EDGY). Phosphoserine occurs at positions 132 and 172. Residues 178–187 (QRSRPRKPRK) are compositionally biased toward basic residues. A Matrin-type zinc finger spans residues 244–274 (YTCRLCDVLIESIAFAHKHIKEKRHKKNIKE). The 50-residue stretch at 551–600 (VGQLWVELLRFYALEFNLADLVISIRVKELVSRELKDWPKKRIAIEDPYS) folds into the PAP-associated 1 domain. A Phosphoserine modification is found at Ser600. The segment covering 734-756 (DDYKGDKVYHPETGRKNEKEKVG) has biased composition (basic and acidic residues). 2 disordered regions span residues 734–757 (DDYK…KVGR) and 831–898 (THSV…EDDE). Polar residues predominate over residues 831 to 841 (THSVQGQTSEM). Composition is skewed to acidic residues over residues 843-859 (PSDE…EEEE), 868-880 (EDED…DELD), and 887-898 (GDEDALSEEDDE). Residue Ser844 is modified to Phosphoserine. Phosphoserine is present on residues Ser893 and Ser939. The tract at residues 951–1495 (SKLIFTKGKS…ASAKRTQQES (545 aa)) is sufficient for monouridylation activity. The CCHC-type 1 zinc-finger motif lies at 963–980 (VVCSLCKREGHLKKDCPE). Residues 1047-1050 (SSKN), 1057-1060 (SDLD), Asn1130, Lys1152, 1170-1174 (SYAYT), and His1286 each bind UTP. Asp1058 and Asp1060 together coordinate Mg(2+). The 54-residue stretch at 1233 to 1286 (SVGQLWLGLLRFYTEEFDFKEHVISIRRKSLLTTFKKQWTSKYIVIEDPFDLNH) folds into the PAP-associated 2 domain. A CCHC-type 2 zinc finger spans residues 1345–1362 (RCCRICGKIGHFMKDCPM). Disordered regions lie at residues 1367 to 1424 (RRRR…MRAA) and 1466 to 1495 (CPQF…QQES). Basic and acidic residues predominate over residues 1381–1410 (PENKEKRSKEDKEIHNKYTEREVSTKEDKP). The segment at 1451–1468 (KRCFICGREGHIKKECPQ) adopts a CCHC-type 3 zinc-finger fold. Residues 1470-1485 (KGSSGSLSSKYMTQGK) are compositionally biased toward polar residues.

Belongs to the DNA polymerase type-B-like family. Interacts with MOV10; the interaction is RNA-dependent. Mg(2+) serves as cofactor. Mn(2+) is required as a cofactor.

The protein resides in the cytoplasm. The catalysed reaction is RNA(n) + UTP = RNA(n)-3'-uridine ribonucleotide + diphosphate. Functionally, uridylyltransferase that mediates the terminal uridylation of mRNAs with short (less than 25 nucleotides) poly(A) tails, hence facilitating global mRNA decay. Essential for both oocyte maturation and fertility. Through 3' terminal uridylation of mRNA, sculpts, with TUT7, the maternal transcriptome by eliminating transcripts during oocyte growth. Involved in microRNA (miRNA)-induced gene silencing through uridylation of deadenylated miRNA targets. Also functions as an integral regulator of microRNA biogenesiS using 3 different uridylation mechanisms. Acts as a suppressor of miRNA biogenesis by mediating the terminal uridylation of some miRNA precursors, including that of let-7 (pre-let-7). Uridylated pre-let-7 RNA is not processed by Dicer and undergo degradation. Pre-let-7 uridylation is strongly enhanced in the presence of LIN28A. In the absence of LIN28A, TUT7 and TUT4 monouridylate group II pre-miRNAs, which includes most of pre-let7 members, that shapes an optimal 3' end overhang for efficient processing. Add oligo-U tails to truncated pre-miRNAS with a 5' overhang which may promote rapid degradation of non-functional pre-miRNA species. Does not play a role in replication-dependent histone mRNA degradation. Due to functional redundancy between TUT4 and TUT7, the identification of the specific role of each of these proteins is difficult. TUT4 and TUT7 restrict retrotransposition of long interspersed element-1 (LINE-1) in cooperation with MOV10 counteracting the RNA chaperonne activity of L1RE1. TUT7 uridylates LINE-1 mRNAs in the cytoplasm which inhibits initiation of reverse transcription once in the nucleus, whereas uridylation by TUT4 destabilizes mRNAs in cytoplasmic ribonucleoprotein granules. This Homo sapiens (Human) protein is Terminal uridylyltransferase 7.